Reading from the N-terminus, the 114-residue chain is Non-specific lipid-transfer protein 2 (114 aa).

Positions 1-23 (MEMVNKIACFVLLCMVVVAPHAE) are cleaved as a signal peptide. Cystine bridges form between cysteine 27–cysteine 73, cysteine 37–cysteine 50, cysteine 51–cysteine 96, and cysteine 71–cysteine 110.

It belongs to the plant LTP family.

In terms of biological role, plant non-specific lipid-transfer proteins transfer phospholipids as well as galactolipids across membranes. May play a role in wax or cutin deposition in the cell walls of expanding epidermal cells and certain secretory tissues. The protein is Non-specific lipid-transfer protein 2 (LTP2) of Solanum pennellii (Tomato).